A 374-amino-acid chain; its full sequence is 5-hydroxytryptamine receptor 1D (374 aa).

Over M1 to R35 the chain is Extracellular. N-linked (GlcNAc...) asparagine glycosylation is found at N5, N17, and N21. The chain crosses the membrane as a helical span at residues I36–L61. The Cytoplasmic portion of the chain corresponds to L62–Y72. The helical transmembrane segment at L73–A94 threads the bilayer. Residues Y95–I106 lie on the Extracellular side of the membrane. The helical transmembrane segment at L107 to L131 threads the bilayer. C108 and C185 are disulfide-bonded. D115 and C119 together coordinate serotonin. Residues D132–Y134 carry the DRY motif; important for ligand-induced conformation changes motif. Topologically, residues D132 to H151 are cytoplasmic. Residues A152–W173 form a helical membrane-spanning segment. Over R174–Q191 the chain is Extracellular. A helical membrane pass occupies residues I192–G215. The Cytoplasmic portion of the chain corresponds to R216–T297. Residues K298 to I323 traverse the membrane as a helical segment. S318 is a serotonin binding site. Over C324–P332 the chain is Extracellular. Residues A333–F356 form a helical membrane-spanning segment. An NPxxY motif; important for ligand-induced conformation changes and signaling motif is present at residues N349–Y353. At N357 to S374 the chain is on the cytoplasmic side.

The protein belongs to the G-protein coupled receptor 1 family. As to quaternary structure, homodimer. Heterodimer with HTR1B. Detected in the motor column in spinal cord, and in several cranial motor nuclei, including nucleus ambiguous, oculomotoris, trochelaris and abducens. Detected in gamma motor neurons in the lumbar spinal cord. Detected in proprioceptive sensory neurons in dorsal root ganglia.

Its subcellular location is the cell membrane. Its function is as follows. G-protein coupled receptor for 5-hydroxytryptamine (serotonin). Also functions as a receptor for ergot alkaloid derivatives, various anxiolytic and antidepressant drugs and other psychoactive substances. Ligand binding causes a conformation change that triggers signaling via guanine nucleotide-binding proteins (G proteins) and modulates the activity of downstream effectors, such as adenylate cyclase. HTR1D is coupled to G(i)/G(o) G alpha proteins and mediates inhibitory neurotransmission by inhibiting adenylate cyclase activity. Regulates the release of 5-hydroxytryptamine in the brain, and thereby affects neural activity. May also play a role in regulating the release of other neurotransmitters. May play a role in vasoconstriction. The polypeptide is 5-hydroxytryptamine receptor 1D (Htr1d) (Mus musculus (Mouse)).